The sequence spans 209 residues: Ribonuclease HII (209 aa).

The RNase H type-2 domain maps to 20 to 209 (QLEIGIDEVG…KSFLTKLNLI (190 aa)). A divalent metal cation is bound by residues Asp-26, Glu-27, and Asp-122.

This sequence belongs to the RNase HII family. It depends on Mn(2+) as a cofactor. Mg(2+) serves as cofactor.

The protein resides in the cytoplasm. The enzyme catalyses Endonucleolytic cleavage to 5'-phosphomonoester.. Its function is as follows. Endonuclease that specifically degrades the RNA of RNA-DNA hybrids. This chain is Ribonuclease HII, found in Prochlorococcus marinus (strain MIT 9515).